The primary structure comprises 253 residues: Ribonuclease PH (253 aa).

Phosphate is bound by residues arginine 86 and 124–126; that span reads GTR.

This sequence belongs to the RNase PH family. Homohexameric ring arranged as a trimer of dimers.

It carries out the reaction tRNA(n+1) + phosphate = tRNA(n) + a ribonucleoside 5'-diphosphate. In terms of biological role, phosphorolytic 3'-5' exoribonuclease that plays an important role in tRNA 3'-end maturation. Removes nucleotide residues following the 3'-CCA terminus of tRNAs; can also add nucleotides to the ends of RNA molecules by using nucleoside diphosphates as substrates, but this may not be physiologically important. Probably plays a role in initiation of 16S rRNA degradation (leading to ribosome degradation) during starvation. The polypeptide is Ribonuclease PH (Brevibacillus brevis (strain 47 / JCM 6285 / NBRC 100599)).